Here is a 469-residue protein sequence, read N- to C-terminus: Argininosuccinate lyase (469 aa).

It belongs to the lyase 1 family. Argininosuccinate lyase subfamily.

It is found in the cytoplasm. It catalyses the reaction 2-(N(omega)-L-arginino)succinate = fumarate + L-arginine. It participates in amino-acid biosynthesis; L-arginine biosynthesis; L-arginine from L-ornithine and carbamoyl phosphate: step 3/3. This is Argininosuccinate lyase from Burkholderia thailandensis (strain ATCC 700388 / DSM 13276 / CCUG 48851 / CIP 106301 / E264).